The sequence spans 106 residues: Neisseria hypothetical transcription factor (106 aa).

One can recognise an HTH cro/C1-type domain in the interval 26–80 (MRLFRVNKGWSQEELARQCGLDRTYVSAVERKRWNIALSNIEKMAAALGVAAYQL). The segment at residues 37 to 56 (QEELARQCGLDRTYVSAVER) is a DNA-binding region (H-T-H motif).

Homodimer. Can interact with the dimeric form of the DNA mimic protein DMP19 with 1:1 stoichiometry.

The protein localises to the cytoplasm. Its activity is regulated as follows. Repressor activity is inhibited in the presence of the DNA mimic protein DMP19, which interacts with NHTF and prevents binding of NHTF to its DNA-binding sites. In terms of biological role, transcriptional regulator probably involved in the response to nitrogen levels. Down-regulates its own expression as well as the expression of the downstream gene, glnD, which encodes the [Protein-PII] uridylyltransferase, a key enzyme in the nitrogen regulation system. Acts by binding to a specific palindromic DNA sequence (5'-TGTNANTNACA-3') in its 5'-untranslated region. This chain is Neisseria hypothetical transcription factor, found in Neisseria meningitidis serogroup B (strain ATCC BAA-335 / MC58).